Consider the following 156-residue polypeptide: Small ribosomal subunit protein uS7 (156 aa).

Belongs to the universal ribosomal protein uS7 family. As to quaternary structure, part of the 30S ribosomal subunit. Contacts proteins S9 and S11.

Functionally, one of the primary rRNA binding proteins, it binds directly to 16S rRNA where it nucleates assembly of the head domain of the 30S subunit. Is located at the subunit interface close to the decoding center, probably blocks exit of the E-site tRNA. This Tropheryma whipplei (strain TW08/27) (Whipple's bacillus) protein is Small ribosomal subunit protein uS7.